A 338-amino-acid polypeptide reads, in one-letter code: Protein-glutamate methylesterase/protein-glutamine glutaminase 2 (338 aa).

A Response regulatory domain is found at 2 to 119 (RIGIVNDSAL…SDTKLAAGPL (118 aa)). The residue at position 53 (aspartate 53) is a 4-aspartylphosphate. A CheB-type methylesterase domain is found at 145 to 330 (PTPTAPRLVA…PLQKIAPRLV (186 aa)). Catalysis depends on residues serine 158, histidine 185, and aspartate 278.

It belongs to the CheB family. Post-translationally, phosphorylated by CheA. Phosphorylation of the N-terminal regulatory domain activates the methylesterase activity.

Its subcellular location is the cytoplasm. The catalysed reaction is [protein]-L-glutamate 5-O-methyl ester + H2O = L-glutamyl-[protein] + methanol + H(+). It catalyses the reaction L-glutaminyl-[protein] + H2O = L-glutamyl-[protein] + NH4(+). Involved in chemotaxis. Part of a chemotaxis signal transduction system that modulates chemotaxis in response to various stimuli. Catalyzes the demethylation of specific methylglutamate residues introduced into the chemoreceptors (methyl-accepting chemotaxis proteins or MCP) by CheR. Also mediates the irreversible deamidation of specific glutamine residues to glutamic acid. This chain is Protein-glutamate methylesterase/protein-glutamine glutaminase 2, found in Cupriavidus metallidurans (strain ATCC 43123 / DSM 2839 / NBRC 102507 / CH34) (Ralstonia metallidurans).